A 204-amino-acid polypeptide reads, in one-letter code: Nicotine blue oxidoreductase (204 aa).

As to quaternary structure, homotetramer. FMN serves as cofactor.

The catalysed reaction is 3,3'-bipyridine-2,2',5,5',6,6'-hexol + NADP(+) = (E)-2,2',5,5'-tetrahydroxy-6H,6'H-(3,3'-bipyridinylidene)-6,6'-dione + NADPH + 3 H(+). It carries out the reaction 3,3'-bipyridine-2,2',5,5',6,6'-hexol + NAD(+) = (E)-2,2',5,5'-tetrahydroxy-6H,6'H-(3,3'-bipyridinylidene)-6,6'-dione + NADH + 3 H(+). It functions in the pathway alkaloid degradation; nicotine degradation. In terms of biological role, catalyzes the reduction of nicotine blue to its hydroquinone form. Nicotine blue is the name given to the compound formed by the autocatalytic condensation of two molecules of 2,3,6-trihydroxypyridine, an intermediate in the nicotine degradation pathway. May play a role in preventing the intracellular formation of nicotine blue semiquinone radicals, which by redox cycling would lead to the formation of toxic reactive oxygen species. Besides nicotine blue, several other quinones are reduced by nboR. The protein is Nicotine blue oxidoreductase (nboR) of Paenarthrobacter nicotinovorans (Arthrobacter nicotinovorans).